We begin with the raw amino-acid sequence, 102 residues long: Small ribosomal subunit protein uS10 (102 aa).

The protein belongs to the universal ribosomal protein uS10 family. As to quaternary structure, part of the 30S ribosomal subunit.

Involved in the binding of tRNA to the ribosomes. In Streptococcus equi subsp. zooepidemicus (strain MGCS10565), this protein is Small ribosomal subunit protein uS10.